The following is a 560-amino-acid chain: uncharacterized protein (560 aa).

Transmembrane regions (helical) follow at residues 9-29, 61-81, 136-156, 305-325, and 442-462; these read LVITILLIVLGANWLLSSFLL, ILVPTGFPLTTGLGLSLKYKI, IGIANSIATVEGFTLSLASMM, SLQIWGKLFAVLLHGGSASFI, and VVLELYCPYAIMGPVAHTNFY.

The protein resides in the membrane. This is an uncharacterized protein from Saccharomyces cerevisiae (strain ATCC 204508 / S288c) (Baker's yeast).